Here is an 819-residue protein sequence, read N- to C-terminus: Protein SCARECROW (819 aa).

Disordered regions lie at residues leucine 6–arginine 49, histidine 65–asparagine 136, serine 212–threonine 231, and proline 393–threonine 420. The span at threonine 15–threonine 33 shows a compositional bias: low complexity. A compositionally biased stretch (polar residues) spans arginine 79 to valine 98. Low complexity predominate over residues threonine 99 to asparagine 136. Residues threonine 418–leucine 448 are a coiled coil. In terms of domain architecture, GRAS spans lysine 438–arginine 806. The interval leucine 445–tyrosine 507 is leucine repeat I (LRI). The short motif at leucine 452 to glutamate 456 is the LxCxE motif element. The segment at phenylalanine 526–glycine 591 is VHIID. Positions valine 557–aspartate 561 match the VHIID motif. The tract at residues alanine 601–lysine 633 is leucine repeat II (LRII). Residues valine 642–asparagine 729 form a PFYRE region. The interval alanine 732–arginine 806 is SAW.

Belongs to the GRAS family. In terms of tissue distribution, expressed in shoot apical meristem, leaf primordia, between the cortex and the differentiating vessels in lower shoots and in root endodermis.

It localises to the nucleus. Putative transcription factor involved in asymmetric cell division. This is Protein SCARECROW (SCR) from Pisum sativum (Garden pea).